The primary structure comprises 482 residues: ATP synthase subunit beta (482 aa).

161–168 (GGAGVGKT) serves as a coordination point for ATP.

Belongs to the ATPase alpha/beta chains family. In terms of assembly, F-type ATPases have 2 components, CF(1) - the catalytic core - and CF(0) - the membrane proton channel. CF(1) has five subunits: alpha(3), beta(3), gamma(1), delta(1), epsilon(1). CF(0) has three main subunits: a(1), b(2) and c(9-12). The alpha and beta chains form an alternating ring which encloses part of the gamma chain. CF(1) is attached to CF(0) by a central stalk formed by the gamma and epsilon chains, while a peripheral stalk is formed by the delta and b chains.

The protein resides in the cell inner membrane. The enzyme catalyses ATP + H2O + 4 H(+)(in) = ADP + phosphate + 5 H(+)(out). Functionally, produces ATP from ADP in the presence of a proton gradient across the membrane. The catalytic sites are hosted primarily by the beta subunits. In Solibacter usitatus (strain Ellin6076), this protein is ATP synthase subunit beta.